The sequence spans 332 residues: Glycerol-3-phosphate dehydrogenase [NAD(P)+] (332 aa).

Ser11, Trp12, Arg32, Arg33, and Lys106 together coordinate NADPH. Sn-glycerol 3-phosphate-binding residues include Lys106 and Gly136. Residue Ala140 coordinates NADPH. The sn-glycerol 3-phosphate site is built by Lys191, Asp244, Ser254, Arg255, and Asn256. The active-site Proton acceptor is the Lys191. Residue Arg255 participates in NADPH binding. NADPH-binding residues include Val280 and Glu282.

It belongs to the NAD-dependent glycerol-3-phosphate dehydrogenase family.

Its subcellular location is the cytoplasm. The enzyme catalyses sn-glycerol 3-phosphate + NAD(+) = dihydroxyacetone phosphate + NADH + H(+). It catalyses the reaction sn-glycerol 3-phosphate + NADP(+) = dihydroxyacetone phosphate + NADPH + H(+). The protein operates within membrane lipid metabolism; glycerophospholipid metabolism. Functionally, catalyzes the reduction of the glycolytic intermediate dihydroxyacetone phosphate (DHAP) to sn-glycerol 3-phosphate (G3P), the key precursor for phospholipid synthesis. The protein is Glycerol-3-phosphate dehydrogenase [NAD(P)+] of Corynebacterium glutamicum (strain R).